The primary structure comprises 141 residues: Large ribosomal subunit protein uL11 (141 aa).

This sequence belongs to the universal ribosomal protein uL11 family. Part of the ribosomal stalk of the 50S ribosomal subunit. Interacts with L10 and the large rRNA to form the base of the stalk. L10 forms an elongated spine to which L12 dimers bind in a sequential fashion forming a multimeric L10(L12)X complex. One or more lysine residues are methylated.

Its function is as follows. Forms part of the ribosomal stalk which helps the ribosome interact with GTP-bound translation factors. This chain is Large ribosomal subunit protein uL11, found in Ruegeria pomeroyi (strain ATCC 700808 / DSM 15171 / DSS-3) (Silicibacter pomeroyi).